The chain runs to 407 residues: 1-deoxy-D-xylulose 5-phosphate reductoisomerase (407 aa).

NADPH-binding residues include T25, G26, S27, I28, N53, and N136. Residue K137 participates in 1-deoxy-D-xylulose 5-phosphate binding. E138 contacts NADPH. Residue D162 coordinates Mn(2+). 1-deoxy-D-xylulose 5-phosphate contacts are provided by S163, E164, S188, and H211. A Mn(2+)-binding site is contributed by E164. G217 provides a ligand contact to NADPH. Positions 224, 229, 230, and 233 each coordinate 1-deoxy-D-xylulose 5-phosphate. E233 serves as a coordination point for Mn(2+).

It belongs to the DXR family. Requires Mg(2+) as cofactor. Mn(2+) is required as a cofactor.

The catalysed reaction is 2-C-methyl-D-erythritol 4-phosphate + NADP(+) = 1-deoxy-D-xylulose 5-phosphate + NADPH + H(+). It participates in isoprenoid biosynthesis; isopentenyl diphosphate biosynthesis via DXP pathway; isopentenyl diphosphate from 1-deoxy-D-xylulose 5-phosphate: step 1/6. In terms of biological role, catalyzes the NADPH-dependent rearrangement and reduction of 1-deoxy-D-xylulose-5-phosphate (DXP) to 2-C-methyl-D-erythritol 4-phosphate (MEP). The chain is 1-deoxy-D-xylulose 5-phosphate reductoisomerase from Bradyrhizobium sp. (strain ORS 278).